Consider the following 652-residue polypeptide: 2',3'-cyclic-nucleotide 2'-phosphodiesterase/3'-nucleotidase (652 aa).

An N-terminal signal peptide occupies residues 1 to 24 (MFKRPLTLSLLASLIALTTSTAQA). A divalent metal cation contacts are provided by D36, H38, D81, N121, H230, H262, and H264. Substrate-binding positions include Y445 and 549 to 555 (YRAYSGK).

Belongs to the 5'-nucleotidase family. A divalent metal cation serves as cofactor.

It localises to the periplasm. The enzyme catalyses a nucleoside 2',3'-cyclic phosphate + H2O = a nucleoside 3'-phosphate + H(+). It catalyses the reaction a ribonucleoside 3'-phosphate + H2O = a ribonucleoside + phosphate. Functionally, this bifunctional enzyme catalyzes two consecutive reactions during ribonucleic acid degradation. Converts a 2',3'-cyclic nucleotide to a 3'-nucleotide and then the 3'-nucleotide to the corresponding nucleoside and phosphate. In Yersinia enterocolitica, this protein is 2',3'-cyclic-nucleotide 2'-phosphodiesterase/3'-nucleotidase (cpdB).